The primary structure comprises 218 residues: Elongation factor Ts (218 aa).

Positions 82–85 are involved in Mg(2+) ion dislocation from EF-Tu; sequence TDFV.

Belongs to the EF-Ts family.

It localises to the cytoplasm. Associates with the EF-Tu.GDP complex and induces the exchange of GDP to GTP. It remains bound to the aminoacyl-tRNA.EF-Tu.GTP complex up to the GTP hydrolysis stage on the ribosome. The chain is Elongation factor Ts from Prochlorococcus marinus (strain MIT 9301).